The sequence spans 291 residues: ATP synthase gamma chain (291 aa).

This sequence belongs to the ATPase gamma chain family. As to quaternary structure, F-type ATPases have 2 components, CF(1) - the catalytic core - and CF(0) - the membrane proton channel. CF(1) has five subunits: alpha(3), beta(3), gamma(1), delta(1), epsilon(1). CF(0) has three main subunits: a, b and c.

The protein resides in the cell membrane. In terms of biological role, produces ATP from ADP in the presence of a proton gradient across the membrane. The gamma chain is believed to be important in regulating ATPase activity and the flow of protons through the CF(0) complex. In Streptococcus equinus (Streptococcus bovis), this protein is ATP synthase gamma chain.